The sequence spans 421 residues: 3-isopropylmalate dehydratase large subunit (421 aa).

[4Fe-4S] cluster-binding residues include Cys292, Cys352, and Cys355.

Belongs to the aconitase/IPM isomerase family. LeuC type 2 subfamily. As to quaternary structure, heterodimer of LeuC and LeuD. [4Fe-4S] cluster is required as a cofactor.

The catalysed reaction is (2R,3S)-3-isopropylmalate = (2S)-2-isopropylmalate. It participates in amino-acid biosynthesis; L-leucine biosynthesis; L-leucine from 3-methyl-2-oxobutanoate: step 2/4. Its function is as follows. Catalyzes the isomerization between 2-isopropylmalate and 3-isopropylmalate, via the formation of 2-isopropylmaleate. The protein is 3-isopropylmalate dehydratase large subunit of Herpetosiphon aurantiacus (strain ATCC 23779 / DSM 785 / 114-95).